A 168-amino-acid polypeptide reads, in one-letter code: Ribosome maturation factor RimM (168 aa).

A PRC barrel domain is found at Lys-95–Phe-168.

Belongs to the RimM family. Binds ribosomal protein uS19.

Its subcellular location is the cytoplasm. In terms of biological role, an accessory protein needed during the final step in the assembly of 30S ribosomal subunit, possibly for assembly of the head region. Essential for efficient processing of 16S rRNA. May be needed both before and after RbfA during the maturation of 16S rRNA. It has affinity for free ribosomal 30S subunits but not for 70S ribosomes. In Coxiella burnetii (strain CbuK_Q154) (Coxiella burnetii (strain Q154)), this protein is Ribosome maturation factor RimM.